The sequence spans 503 residues: Cytochrome P450 11B2, mitochondrial (503 aa).

A mitochondrion-targeting transit peptide spans 1–24 (MALRAKAEVCVAAPWLSLQRARAL). 21-hydroxyprogesterone is bound at residue phenylalanine 381. Cysteine 450 is a heme binding site.

It belongs to the cytochrome P450 family. Heme serves as cofactor. In terms of tissue distribution, expressed sporadically in the zona glomerulosa (zG) of the adrenal cortex (conventional zonation), as well as in aldosterone-producing cell clusters (APCCs) composed of morphological zG cells in contact with the capsule (variegated zonation).

Its subcellular location is the mitochondrion inner membrane. The enzyme catalyses a steroid + 2 reduced [adrenodoxin] + O2 + 2 H(+) = an 11beta-hydroxysteroid + 2 oxidized [adrenodoxin] + H2O. It carries out the reaction 21-hydroxyprogesterone + 2 reduced [adrenodoxin] + O2 + 2 H(+) = corticosterone + 2 oxidized [adrenodoxin] + H2O. It catalyses the reaction corticosterone + 2 reduced [adrenodoxin] + O2 + 2 H(+) = 18-hydroxycorticosterone + 2 oxidized [adrenodoxin] + H2O. The catalysed reaction is 18-hydroxycorticosterone + 2 reduced [adrenodoxin] + O2 + 2 H(+) = aldosterone + 2 oxidized [adrenodoxin] + 2 H2O. The enzyme catalyses 11-deoxycortisol + 2 reduced [adrenodoxin] + O2 + 2 H(+) = cortisol + 2 oxidized [adrenodoxin] + H2O. It carries out the reaction 21-hydroxyprogesterone + 2 reduced [adrenodoxin] + O2 + 2 H(+) = 18-hydroxy-11-deoxycorticosterone + 2 oxidized [adrenodoxin] + H2O. It catalyses the reaction cortisol + 2 reduced [adrenodoxin] + O2 + 2 H(+) = 18-hydroxycortisol + 2 oxidized [adrenodoxin] + H2O. The catalysed reaction is 18-hydroxycortisol + 2 reduced [adrenodoxin] + O2 + 2 H(+) = 18-oxocortisol + 2 oxidized [adrenodoxin] + 2 H2O. It participates in steroid biosynthesis. Functionally, a cytochrome P450 monooxygenase that catalyzes the biosynthesis of aldosterone, the main mineralocorticoid in the human body responsible for salt and water homeostasis, thus involved in blood pressure regulation, arterial hypertension, and the development of heart failure. Catalyzes three sequential oxidative reactions of 11-deoxycorticosterone (21-hydroxyprogesterone), namely 11-beta hydroxylation, followed by two successive oxidations at C18 yielding 18-hydroxy and then 18-oxo intermediates (that would not leave the enzyme active site during the consecutive hydroxylation reactions), ending with the formation of aldosterone. Can also produce 18-hydroxycortisol and 18-oxocortisol, derived from successive oxidations of cortisol at C18, normally found at very low levels, but significantly increased in primary aldosteronism, the most common form of secondary hypertension. Mechanistically, uses molecular oxygen inserting one oxygen atom into a substrate and reducing the second into a water molecule. Two electrons are provided by NADPH via a two-protein mitochondrial transfer system comprising flavoprotein FDXR (adrenodoxin/ferredoxin reductase) and nonheme iron-sulfur protein FDX1 or FDX2 (adrenodoxin/ferredoxin). Could also be involved in the androgen metabolic pathway. This chain is Cytochrome P450 11B2, mitochondrial, found in Homo sapiens (Human).